The chain runs to 681 residues: Peroxisomal acyl-coenzyme A oxidase 2 (681 aa).

Residue S9 is modified to Phosphoserine. 5 positions are modified to N6-succinyllysine: K66, K137, K453, K561, and K667. The Microbody targeting signal signature appears at 679–681 (SNL).

This sequence belongs to the acyl-CoA oxidase family. Homodimer. FAD is required as a cofactor. Liver and kidney.

It localises to the peroxisome. The catalysed reaction is (25R)-3alpha,7alpha,12alpha-trihydroxy-5beta-cholestan-26-oyl-CoA + A + H2O = (24R,25R)-3alpha,7alpha,12alpha,24-tetrahydroxy-5beta-cholestan-26-oyl-CoA + AH2. The enzyme catalyses (25S)-3alpha,7alpha,12alpha-trihydroxy-5beta-cholestan-26-oyl-CoA + O2 = (24E)-3alpha,7alpha,12alpha-trihydroxy-5beta-cholest-24-en-26-oyl-CoA + H2O2. Its function is as follows. Oxidizes the CoA esters of the bile acid intermediates di- and tri-hydroxycholestanoic acids. Capable of oxidizing short as well as long chain 2-methyl branched fatty acids. The polypeptide is Peroxisomal acyl-coenzyme A oxidase 2 (Oryctolagus cuniculus (Rabbit)).